We begin with the raw amino-acid sequence, 473 residues long: Inactive FRIGIDA-like protein 2 (473 aa).

Coiled coils occupy residues Ala3–Leu35 and Ser306–Lys361. The segment at Arg356 to Ala384 is disordered. Residues Lys361–Glu373 are compositionally biased toward polar residues.

This sequence belongs to the Frigida family. In terms of tissue distribution, expressed at low levels throughout the plant, with slightly higher expression in developing seeds and the highest expression in pollen.

Inactive FRIGIDA-like 2 protein. This is Inactive FRIGIDA-like protein 2 (FRL2) from Arabidopsis thaliana (Mouse-ear cress).